Reading from the N-terminus, the 418-residue chain is Alditol oxidase (418 aa).

The region spanning 13–179 (ITYTAKELLR…TSLTLDLEPA (167 aa)) is the FAD-binding PCMH-type domain. Residues 41-47 (VLGSGHS), Ser-106, Ser-111, Gly-114, 118-121 (TGTH), and Val-169 each bind FAD. Pros-8alpha-FAD histidine is present on His-46. Ser-106 provides a ligand contact to D-sorbitol. Ser-106 contacts xylitol. D-sorbitol contacts are provided by Glu-320, Arg-322, and Thr-345. The xylitol site is built by Glu-320, Arg-322, and Thr-345. Arg-322 lines the FAD pocket. His-372 provides a ligand contact to FAD. Residue Lys-375 coordinates D-sorbitol. Lys-375 contributes to the xylitol binding site.

The protein belongs to the oxygen-dependent FAD-linked oxidoreductase family. As to quaternary structure, monomer. FAD serves as cofactor.

It catalyses the reaction an alditol + O2 = an aldose + H2O2. The catalysed reaction is xylitol + O2 = D-xylose + H2O2. The enzyme catalyses D-sorbitol + O2 = D-glucose + H2O2. In terms of biological role, oxidase that performs selective oxidation of the terminal primary hydroxyl group of several alditols, with a reduction of O2 to H2O2. Shows highest activity on xylitol and D-sorbitol, and a poor efficiency with D-mannitol and L-threitol. This is Alditol oxidase (xyoA) from Streptomyces coelicolor (strain ATCC BAA-471 / A3(2) / M145).